We begin with the raw amino-acid sequence, 497 residues long: Glycerol kinase (497 aa).

T13 contacts ADP. The ATP site is built by T13, T14, and S15. T13 contributes to the sn-glycerol 3-phosphate binding site. An ADP-binding site is contributed by R17. The sn-glycerol 3-phosphate site is built by R83, E84, and Y135. Residues R83, E84, and Y135 each coordinate glycerol. H231 is subject to Phosphohistidine; by HPr. D245 lines the sn-glycerol 3-phosphate pocket. Glycerol-binding residues include D245 and Q246. ADP-binding residues include T267 and G310. 4 residues coordinate ATP: T267, G310, Q314, and G411. Positions 411 and 415 each coordinate ADP.

Belongs to the FGGY kinase family. In terms of assembly, homotetramer and homodimer (in equilibrium). The phosphoenolpyruvate-dependent sugar phosphotransferase system (PTS), including enzyme I, and histidine-containing protein (HPr) are required for the phosphorylation, which leads to the activation of the enzyme.

It catalyses the reaction glycerol + ATP = sn-glycerol 3-phosphate + ADP + H(+). The protein operates within polyol metabolism; glycerol degradation via glycerol kinase pathway; sn-glycerol 3-phosphate from glycerol: step 1/1. Activated by phosphorylation and inhibited by fructose 1,6-bisphosphate (FBP). Key enzyme in the regulation of glycerol uptake and metabolism. Catalyzes the phosphorylation of glycerol to yield sn-glycerol 3-phosphate. The sequence is that of Glycerol kinase from Listeria monocytogenes serotype 4b (strain F2365).